The primary structure comprises 292 residues: Ribosomal RNA small subunit methyltransferase A (292 aa).

S-adenosyl-L-methionine is bound by residues N28, L30, G55, E76, D101, and N126.

It belongs to the class I-like SAM-binding methyltransferase superfamily. rRNA adenine N(6)-methyltransferase family. RsmA subfamily.

The protein localises to the cytoplasm. The catalysed reaction is adenosine(1518)/adenosine(1519) in 16S rRNA + 4 S-adenosyl-L-methionine = N(6)-dimethyladenosine(1518)/N(6)-dimethyladenosine(1519) in 16S rRNA + 4 S-adenosyl-L-homocysteine + 4 H(+). Specifically dimethylates two adjacent adenosines (A1518 and A1519) in the loop of a conserved hairpin near the 3'-end of 16S rRNA in the 30S particle. May play a critical role in biogenesis of 30S subunits. The sequence is that of Ribosomal RNA small subunit methyltransferase A from Bacillus mycoides (strain KBAB4) (Bacillus weihenstephanensis).